Consider the following 441-residue polypeptide: Xaa-Pro dipeptidase (441 aa).

Mn(2+) is bound by residues D244, D255, H336, E381, and E420.

The protein belongs to the peptidase M24B family. Bacterial-type prolidase subfamily. It depends on Mn(2+) as a cofactor.

It catalyses the reaction Xaa-L-Pro dipeptide + H2O = an L-alpha-amino acid + L-proline. Its function is as follows. Splits dipeptides with a prolyl residue in the C-terminal position. In Xanthomonas campestris pv. campestris (strain 8004), this protein is Xaa-Pro dipeptidase.